A 281-amino-acid polypeptide reads, in one-letter code: 4-hydroxy-3-methylbut-2-enyl diphosphate reductase (281 aa).

Residue Cys-12 participates in [4Fe-4S] cluster binding. Residues His-41 and His-74 each contribute to the (2E)-4-hydroxy-3-methylbut-2-enyl diphosphate site. Positions 41 and 74 each coordinate dimethylallyl diphosphate. Residues His-41 and His-74 each contribute to the isopentenyl diphosphate site. Cys-96 serves as a coordination point for [4Fe-4S] cluster. His-124 contacts (2E)-4-hydroxy-3-methylbut-2-enyl diphosphate. His-124 lines the dimethylallyl diphosphate pocket. Residue His-124 coordinates isopentenyl diphosphate. Glu-126 serves as the catalytic Proton donor. (2E)-4-hydroxy-3-methylbut-2-enyl diphosphate is bound at residue Thr-164. Cys-193 contributes to the [4Fe-4S] cluster binding site. (2E)-4-hydroxy-3-methylbut-2-enyl diphosphate contacts are provided by Ser-221, Asn-223, and Ser-265. Dimethylallyl diphosphate contacts are provided by Ser-221, Asn-223, and Ser-265. Ser-221, Asn-223, and Ser-265 together coordinate isopentenyl diphosphate.

The protein belongs to the IspH family. It depends on [4Fe-4S] cluster as a cofactor.

The enzyme catalyses isopentenyl diphosphate + 2 oxidized [2Fe-2S]-[ferredoxin] + H2O = (2E)-4-hydroxy-3-methylbut-2-enyl diphosphate + 2 reduced [2Fe-2S]-[ferredoxin] + 2 H(+). The catalysed reaction is dimethylallyl diphosphate + 2 oxidized [2Fe-2S]-[ferredoxin] + H2O = (2E)-4-hydroxy-3-methylbut-2-enyl diphosphate + 2 reduced [2Fe-2S]-[ferredoxin] + 2 H(+). It participates in isoprenoid biosynthesis; dimethylallyl diphosphate biosynthesis; dimethylallyl diphosphate from (2E)-4-hydroxy-3-methylbutenyl diphosphate: step 1/1. It functions in the pathway isoprenoid biosynthesis; isopentenyl diphosphate biosynthesis via DXP pathway; isopentenyl diphosphate from 1-deoxy-D-xylulose 5-phosphate: step 6/6. Catalyzes the conversion of 1-hydroxy-2-methyl-2-(E)-butenyl 4-diphosphate (HMBPP) into a mixture of isopentenyl diphosphate (IPP) and dimethylallyl diphosphate (DMAPP). Acts in the terminal step of the DOXP/MEP pathway for isoprenoid precursor biosynthesis. This chain is 4-hydroxy-3-methylbut-2-enyl diphosphate reductase, found in Nitratidesulfovibrio vulgaris (strain DSM 19637 / Miyazaki F) (Desulfovibrio vulgaris).